Consider the following 241-residue polypeptide: Small ribosomal subunit protein uS3 (241 aa).

Positions 39-107 (IREILHKELK…DVVINIVEIR (69 aa)) constitute a KH type-2 domain. Residues 217 to 241 (KRMAEGETGGGGDRGGRQRRDNAAV) are disordered. Over residues 230–241 (RGGRQRRDNAAV) the composition is skewed to basic and acidic residues.

The protein belongs to the universal ribosomal protein uS3 family. Part of the 30S ribosomal subunit. Forms a tight complex with proteins S10 and S14.

Functionally, binds the lower part of the 30S subunit head. Binds mRNA in the 70S ribosome, positioning it for translation. The sequence is that of Small ribosomal subunit protein uS3 from Bradyrhizobium diazoefficiens (strain JCM 10833 / BCRC 13528 / IAM 13628 / NBRC 14792 / USDA 110).